The chain runs to 248 residues: DNA-directed RNA polymerase subunit Rpo3 (248 aa).

Belongs to the archaeal Rpo3/eukaryotic RPB3 RNA polymerase subunit family. Part of the RNA polymerase complex.

The protein localises to the cytoplasm. It catalyses the reaction RNA(n) + a ribonucleoside 5'-triphosphate = RNA(n+1) + diphosphate. DNA-dependent RNA polymerase (RNAP) catalyzes the transcription of DNA into RNA using the four ribonucleoside triphosphates as substrates. The protein is DNA-directed RNA polymerase subunit Rpo3 of Halobacterium salinarum (strain ATCC 29341 / DSM 671 / R1).